The following is a 726-amino-acid chain: PTS system glucose-specific EIICBA component (726 aa).

The PTS EIIC type-1 domain occupies 1–453 (MMKDTFKNVL…FNYATPGRNG (453 aa)). 9 helical membrane-spanning segments follow: residues 18–38 (FGKA…MISI), 62–82 (IGWG…GGSW), 90–110 (AFAA…IFGV), 139–159 (VLEA…GFVG), 184–204 (FVPF…AAFW), 311–331 (FKVG…VAIY), 344–364 (GMMI…PIEY), 365–385 (MFMF…GAAF), and 419–439 (IVNF…IANF). One can recognise a PTS EIIB type-1 domain in the interval 473-555 (GSQAVNIINL…QDILDSGEII (83 aa)). Cys-495 (phosphocysteine intermediate; for EIIB activity) is an active-site residue. One can recognise a PTS EIIA type-1 domain in the interval 596-700 (DPVFAQKMMG…ETSTVVVFTN (105 aa)). Catalysis depends on His-648, which acts as the Tele-phosphohistidine intermediate; for EIIA activity.

The protein resides in the cell membrane. The catalysed reaction is N(pros)-phospho-L-histidyl-[protein] + D-glucose(out) = D-glucose 6-phosphate(in) + L-histidyl-[protein]. Its function is as follows. The phosphoenolpyruvate-dependent sugar phosphotransferase system (sugar PTS), a major carbohydrate active transport system, catalyzes the phosphorylation of incoming sugar substrates concomitantly with their translocation across the cell membrane. This system is involved in glucose transport. This chain is PTS system glucose-specific EIICBA component (exp5), found in Streptococcus pneumoniae serotype 4 (strain ATCC BAA-334 / TIGR4).